The following is a 149-amino-acid chain: Nascent polypeptide-associated complex subunit beta-2 (149 aa).

The NAC-A/B domain occupies 38–103 (DKDNTKLQAE…PKENTLNGLY (66 aa)).

The protein belongs to the NAC-beta family. In terms of assembly, part of the nascent polypeptide-associated complex (NAC), consisting of EGD2 and either EGD1 or BTT1. NAC associates with ribosomes via EGD1 or BTT1.

The protein localises to the cytoplasm. The protein resides in the nucleus. Functionally, acts as a component of the nascent polypeptide-associated complex (NAC), which promotes mitochondrial protein import by enhancing productive ribosome interactions with the outer mitochondrial membrane. Also blocks the inappropriate interaction of ribosomes translating non-secretory nascent polypeptides with translocation sites in the membrane of the endoplasmic reticulum. BTT1 may act as a transcription factor that exert a negative effect on the expression of several genes that are transcribed by RNA polymerase II. The sequence is that of Nascent polypeptide-associated complex subunit beta-2 (BTT1) from Saccharomyces cerevisiae (strain YJM789) (Baker's yeast).